The following is a 420-amino-acid chain: MRKIIINGGKKLQGEVTVSGAKNSVVALIPAIILSDGVVTLDGVPAISDVDNLIEIIEVMGGSVKRDGETLEIDPRGVKDMPMPFGKINSLRASYYFYGSLLGRYGQAIVGLPGGCDLGPRPIDLHLKAFEAMGASIFYEGEAMRIATDAGQRIKGAHIYMDTVSVGATINTMLAAAKADGRTVIENAAREPEIIDVATLLNNMGARVRGAGTEVITIEGVESLHGTRHQVIPDRIEAGSYIAMAAAIGKGIKIKNVLYEHLESFICKLEAMGVRMTVEEDAIFVEEQGDLKPVDIKTSPYPGFATDLQQPMTPLLLKASGRGKIIDTIYEKRVNHVPELARMGADIQVLGGQIVYNGPTQLSGAPVKASDLRAGAALVTAGLMADGQTEITNIEFILRGYSNIIEKLSDLGADIRLIED.

22 to 23 (KN) contacts phosphoenolpyruvate. Arginine 92 lines the UDP-N-acetyl-alpha-D-glucosamine pocket. The active-site Proton donor is cysteine 116. Cysteine 116 is subject to 2-(S-cysteinyl)pyruvic acid O-phosphothioketal. UDP-N-acetyl-alpha-D-glucosamine is bound by residues 121-125 (RPIDL), aspartate 307, and isoleucine 329.

It belongs to the EPSP synthase family. MurA subfamily.

The protein resides in the cytoplasm. The enzyme catalyses phosphoenolpyruvate + UDP-N-acetyl-alpha-D-glucosamine = UDP-N-acetyl-3-O-(1-carboxyvinyl)-alpha-D-glucosamine + phosphate. Its pathway is cell wall biogenesis; peptidoglycan biosynthesis. Functionally, cell wall formation. Adds enolpyruvyl to UDP-N-acetylglucosamine. The chain is UDP-N-acetylglucosamine 1-carboxyvinyltransferase 2 from Streptococcus thermophilus (strain ATCC BAA-250 / LMG 18311).